The following is a 660-amino-acid chain: uncharacterized protein (660 aa).

Residues 1 to 660 (MGTPCQSARG…RNPGCPRTWR (660 aa)) are disordered. Residues 67–80 (RPGGGNRVGAGRGR) show a composition bias toward gly residues. The span at 104–116 (SNPTGGCSDPQRS) shows a compositional bias: polar residues. 4 tandem repeats follow at residues 149–273 (SARN…GCPR), 274–398 (SARN…GCPR), 399–523 (SARN…GCPR), and 524–648 (SARN…GCPR). A 4 X 125 AA tandem repeats region spans residues 149–648 (SARNPGCPRT…THRRPPGCPR (500 aa)). Low complexity-rich tracts occupy residues 177–196 (RPSGPTGGRPAAPGAPGTPA), 302–321 (RPSGPTGGRPAAPGAPGTPA), 427–446 (RPSGPTGGRPAAPGAPGTPA), and 552–571 (RPSGPTGGRPAAPGAPGTPA).

This is an uncharacterized protein from Homo sapiens (Human).